The sequence spans 747 residues: Flowering time control protein FCA (747 aa).

Residues 80-101 (YSVRPTTPPVQQPLSGQKRGYP) form a disordered region. RRM domains follow at residues 120–201 (VKLF…YADG) and 211–291 (FKLF…FAEP). Over residues 291-301 (PKRPKPGESRE) the composition is skewed to basic and acidic residues. The segment at 291–503 (PKRPKPGESR…QQPLQKMQHP (213 aa)) is disordered. Composition is skewed to polar residues over residues 320–353 (RPTS…SNTG) and 395–406 (SSSATLQQQNRA). Positions 448 to 460 (SSQLPTSQLPPQQ) are enriched in low complexity. Over residues 461 to 498 (NISRATAPQTPLNINLRPTTVSSATVQFPPRSQQQPLQ) the composition is skewed to polar residues. Positions 591–624 (GSVKCTWTEHTSPDGFKYYYNGLTGESKWEKPEE) constitute a WW domain. Over residues 630–641 (REQQKQQQHQEK) the composition is skewed to basic and acidic residues. 2 disordered regions span residues 630–707 (REQQ…SGIG) and 722–747 (AASM…KNKA). Residues 642–673 (PTIQQSQTQLQPLQQQPQQVQQQYQGQQLQQP) are compositionally biased toward low complexity. Polar residues-rich tracts occupy residues 674–707 (FYSS…SGIG) and 726–739 (NDIS…QSPQ).

As to quaternary structure, interacts (via C-terminus) with SWI3B and (via WW domain) with FY (via PPLPP motifs). Constitutively expressed, but the negative feedback maintains the active isoform a low level throughout much of the plant, except in meristematic cells at a specific time in development.

Its subcellular location is the nucleus. In terms of biological role, plays a major role in the promotion of the transition of the vegetative meristem to reproductive development. Plays a role in the regulation of flowering time in the autonomous flowering pathway by decreasing FLOWERING LOCUS C mRNA levels. Required for RNA-mediated chromatin silencing of a range of loci in the genome. Cotranscriptionally recognizes aberrant RNA and marks it for silencing. Controls alternative cleavage and polyadenylation on pre-mRNAs and antisense RNAs. Acts redundantly with FPA to prevent the expression of distally polyadenylated antisense RNAs at the FLC locus. This is Flowering time control protein FCA (FCA) from Arabidopsis thaliana (Mouse-ear cress).